The following is a 137-amino-acid chain: CUB domain-containing protein (137 aa).

Positions 1–21 are cleaved as a signal peptide; that stretch reads MRLSRAFAWPLLCSIATTVKA. 2 disulfide bridges follow: Cys30-Cys51 and Cys75-Cys96. The CUB domain occupies 30 to 132; the sequence is CGGHYTDEYG…TFFEIYYFVD (103 aa).

The polypeptide is CUB domain-containing protein (Homo sapiens (Human)).